A 149-amino-acid chain; its full sequence is 3-dehydroquinate dehydratase (149 aa).

The Proton acceptor role is filled by Tyr26. Substrate is bound by residues Asn77, His83, and Asp90. The Proton donor role is filled by His103. Substrate-binding positions include 104 to 105 (LS) and Arg114.

It belongs to the type-II 3-dehydroquinase family. As to quaternary structure, homododecamer.

The enzyme catalyses 3-dehydroquinate = 3-dehydroshikimate + H2O. The protein operates within metabolic intermediate biosynthesis; chorismate biosynthesis; chorismate from D-erythrose 4-phosphate and phosphoenolpyruvate: step 3/7. Functionally, catalyzes a trans-dehydration via an enolate intermediate. The protein is 3-dehydroquinate dehydratase of Vibrio parahaemolyticus serotype O3:K6 (strain RIMD 2210633).